A 714-amino-acid polypeptide reads, in one-letter code: Polyribonucleotide nucleotidyltransferase (714 aa).

Residues Asp-488 and Asp-494 each contribute to the Mg(2+) site. The KH domain maps to 555–614 (PRIEVMNIPTDKIRDVIGSGGKVIREIVEKTGAKINIEDDGTVKIASSNGKEIEAAKKWI). The region spanning 624–692 (GEIYEGTVVK…ERGKVRLSMK (69 aa)) is the S1 motif domain.

Belongs to the polyribonucleotide nucleotidyltransferase family. Mg(2+) is required as a cofactor.

The protein resides in the cytoplasm. The enzyme catalyses RNA(n+1) + phosphate = RNA(n) + a ribonucleoside 5'-diphosphate. Involved in mRNA degradation. Catalyzes the phosphorolysis of single-stranded polyribonucleotides processively in the 3'- to 5'-direction. The chain is Polyribonucleotide nucleotidyltransferase from Brucella suis biovar 1 (strain 1330).